The primary structure comprises 163 residues: CASP-like protein 1C2 (163 aa).

At 1-6 (MAKSNK) the chain is on the cytoplasmic side. A helical transmembrane segment spans residues 7–27 (IFTNTLRLLALAATVVAIVFM). The Extracellular segment spans residues 28–52 (VTSHDSAQVLNLTFTAKYSNTPAFK). Asn38 carries N-linked (GlcNAc...) asparagine glycosylation. The chain crosses the membrane as a helical span at residues 53-73 (FLVIGEAIAGGYTVISILLSF). Over 74–79 (KGLFWR) the chain is Cytoplasmic. Residues 80 to 100 (LIVILDMVTTVLLTSSISAAL) form a helical membrane-spanning segment. Topologically, residues 101–128 (AIAQVGKKGNTHAGWLPICGQVPDFCDY) are extracellular. The helical transmembrane segment at 129 to 149 (VTIALIAGFAAAIIYFVLLLC) threads the bilayer. At 150-163 (SLYVVLSPIFVATP) the chain is on the cytoplasmic side.

This sequence belongs to the Casparian strip membrane proteins (CASP) family. As to quaternary structure, homodimer and heterodimers.

It localises to the cell membrane. This Populus trichocarpa (Western balsam poplar) protein is CASP-like protein 1C2.